The following is a 541-amino-acid chain: Molybdate transporter 1 (541 aa).

The next 5 membrane-spanning stretches (helical) occupy residues 24–44 (LLLS…PLLL), 58–78 (LLFS…PLPV), 98–118 (TVAA…TGGL), 137–157 (AGMS…GWLW), and 168–188 (GLGE…GLVV). Positions 193 to 213 (QQQQQQQSGEKPQERRKKRSK) are disordered. The next 2 helical transmembrane spans lie at 214 to 234 (MPVQ…FAVV) and 287 to 307 (MAIA…SALA). Residues 317 to 366 (PQLYADDESSDSPLSPSPSASSSSLSSAPPQTPSAETPKPLSSPTSAEEG) form a disordered region. Residues 327–351 (DSPLSPSPSASSSSLSSAPPQTPSA) are compositionally biased toward low complexity. The next 2 helical transmembrane spans lie at 413 to 433 (IILL…PGLL) and 435 to 455 (LLGK…GVEL). Positions 510-541 (TEKGRGGEQGLLGEEEEEEEQGRVDEESPLLR) are disordered.

This sequence belongs to the SLC26A/SulP transporter (TC 2.A.53) family.

The protein resides in the vacuole membrane. Exports stored molybdate from the vacuole into the cytosol, making it available for molybdate cofactor (Moco) biosynthesis. Plays a role in molybdate homeostasis as high cytosolic levels of molybdate are toxic to cells. Not required for molybdate import into cells. The protein is Molybdate transporter 1 of Neurospora crassa (strain ATCC 24698 / 74-OR23-1A / CBS 708.71 / DSM 1257 / FGSC 987).